The following is a 286-amino-acid chain: Fructose-bisphosphate aldolase (286 aa).

S50 lines the D-glyceraldehyde 3-phosphate pocket. D85 serves as the catalytic Proton donor. Residues H86, D107, E137, and H181 each coordinate Zn(2+). G182 serves as a coordination point for dihydroxyacetone phosphate. H209 is a binding site for Zn(2+). Dihydroxyacetone phosphate-binding positions include 210–212 (GGT) and 231–234 (NVNT).

Belongs to the class II fructose-bisphosphate aldolase family. The cofactor is Zn(2+).

The enzyme catalyses beta-D-fructose 1,6-bisphosphate = D-glyceraldehyde 3-phosphate + dihydroxyacetone phosphate. Its pathway is carbohydrate degradation; glycolysis; D-glyceraldehyde 3-phosphate and glycerone phosphate from D-glucose: step 4/4. Catalyzes the aldol condensation of dihydroxyacetone phosphate (DHAP or glycerone-phosphate) with glyceraldehyde 3-phosphate (G3P) to form fructose 1,6-bisphosphate (FBP) in gluconeogenesis and the reverse reaction in glycolysis. This is Fructose-bisphosphate aldolase (fba) from Staphylococcus epidermidis (strain ATCC 35984 / DSM 28319 / BCRC 17069 / CCUG 31568 / BM 3577 / RP62A).